The following is a 400-amino-acid chain: Argininosuccinate synthase (400 aa).

Residue 9–17 (AYSGGLDTS) coordinates ATP. An L-citrulline-binding site is contributed by Tyr-87. Gly-117 provides a ligand contact to ATP. The L-aspartate site is built by Thr-119, Asn-123, and Asp-124. Asn-123 serves as a coordination point for L-citrulline. The L-citrulline site is built by Arg-127, Ser-176, Ser-185, Glu-261, and Tyr-273.

It belongs to the argininosuccinate synthase family. Type 1 subfamily. As to quaternary structure, homotetramer.

It is found in the cytoplasm. The enzyme catalyses L-citrulline + L-aspartate + ATP = 2-(N(omega)-L-arginino)succinate + AMP + diphosphate + H(+). It functions in the pathway amino-acid biosynthesis; L-arginine biosynthesis; L-arginine from L-ornithine and carbamoyl phosphate: step 2/3. This chain is Argininosuccinate synthase, found in Chlorobium phaeobacteroides (strain DSM 266 / SMG 266 / 2430).